A 130-amino-acid chain; its full sequence is DNA-directed RNA polymerase subunit omega (130 aa).

The tract at residues 109-130 (EEELLKGLEGLAPPEEQPEEDE) is disordered.

It belongs to the RNA polymerase subunit omega family. As to quaternary structure, the RNAP catalytic core consists of 2 alpha, 1 beta, 1 beta' and 1 omega subunit. When a sigma factor is associated with the core the holoenzyme is formed, which can initiate transcription.

It catalyses the reaction RNA(n) + a ribonucleoside 5'-triphosphate = RNA(n+1) + diphosphate. Functionally, promotes RNA polymerase assembly. Latches the N- and C-terminal regions of the beta' subunit thereby facilitating its interaction with the beta and alpha subunits. The polypeptide is DNA-directed RNA polymerase subunit omega (Rhodopseudomonas palustris (strain BisA53)).